We begin with the raw amino-acid sequence, 588 residues long: Ufm1-specific protease (588 aa).

Active-site residues include C420, D544, and H546.

It belongs to the peptidase C78 family. Interacts with odr-4.

It is found in the endoplasmic reticulum membrane. The protein resides in the cytoplasm. Its subcellular location is the perinuclear region. Thiol protease which recognizes and hydrolyzes the peptide bond at the C-terminal Gly of ufm-1, a ubiquitin-like modifier protein bound to a number of target proteins. Required, with oct-4, for the localization of a subset of 7 transmembrane domain odorant receptors, including odr-10, to the cilia of olfactory neurons AWA and AWC. Operates in aggregation behavior, and responses to oxygen levels. This Caenorhabditis briggsae protein is Ufm1-specific protease.